A 197-amino-acid chain; its full sequence is Small ribosomal subunit protein uS4c (197 aa).

One can recognise an S4 RNA-binding domain in the interval 92-153 (MRLDAVVYRL…APIVEHAKTF (62 aa)).

This sequence belongs to the universal ribosomal protein uS4 family. As to quaternary structure, part of the 30S ribosomal subunit. Contacts protein S5. The interaction surface between S4 and S5 is involved in control of translational fidelity.

It localises to the plastid. The protein resides in the chloroplast. Its function is as follows. One of the primary rRNA binding proteins, it binds directly to 16S rRNA where it nucleates assembly of the body of the 30S subunit. With S5 and S12 plays an important role in translational accuracy. This Ostreococcus tauri protein is Small ribosomal subunit protein uS4c (rps4).